The chain runs to 343 residues: Leucine-rich repeat-containing protein 39 (343 aa).

LRR repeat units follow at residues Glu-64–Leu-87, Ser-88–Phe-110, Gln-111–Leu-133, Thr-134–Cys-156, Asn-158–Leu-180, Lys-181–Leu-203, Pro-204–Met-226, Lys-228–Met-249, Lys-250–Asn-274, and Leu-275–Asn-295.

The protein resides in the cytoplasm. Its subcellular location is the myofibril. The protein localises to the sarcomere. It is found in the m line. Component of the sarcomeric M-band which plays a role in myocyte response to biomechanical stress. May regulate expression of other M-band proteins via an SRF-dependent pathway. Important for normal contractile function in heart. This Danio rerio (Zebrafish) protein is Leucine-rich repeat-containing protein 39.